Consider the following 119-residue polypeptide: MIGIDIVSIARVEKCVKRFEMKFLERFLSPSEIVLCKDKTSSIAGFFALKEACSKALQVGIGKELSFLDIRISKSPKNAPLITLSKEKMDYFNIQSLSASISHDAGFAIAVVMVSSSNL.

Mg(2+)-binding residues include Asp5 and Glu51.

Belongs to the P-Pant transferase superfamily. AcpS family. It depends on Mg(2+) as a cofactor.

Its subcellular location is the cytoplasm. The enzyme catalyses apo-[ACP] + CoA = holo-[ACP] + adenosine 3',5'-bisphosphate + H(+). Transfers the 4'-phosphopantetheine moiety from coenzyme A to a Ser of acyl-carrier-protein. This chain is Holo-[acyl-carrier-protein] synthase, found in Helicobacter pylori (strain G27).